Here is a 177-residue protein sequence, read N- to C-terminus: Dual-action ribosomal maturation protein DarP (177 aa).

It belongs to the DarP family.

Its subcellular location is the cytoplasm. Member of a network of 50S ribosomal subunit biogenesis factors which assembles along the 30S-50S interface, preventing incorrect 23S rRNA structures from forming. Promotes peptidyl transferase center (PTC) maturation. The chain is Dual-action ribosomal maturation protein DarP from Glaesserella parasuis serovar 5 (strain SH0165) (Haemophilus parasuis).